The sequence spans 377 residues: Glutamate 5-kinase (377 aa).

K20 provides a ligand contact to ATP. 3 residues coordinate substrate: S60, D147, and N159. Residue 179 to 180 (TD) participates in ATP binding. Residues 285 to 363 (AGRLVIDDGA…DKVYQVLGEA (79 aa)) form the PUA domain.

It belongs to the glutamate 5-kinase family.

Its subcellular location is the cytoplasm. The enzyme catalyses L-glutamate + ATP = L-glutamyl 5-phosphate + ADP. It functions in the pathway amino-acid biosynthesis; L-proline biosynthesis; L-glutamate 5-semialdehyde from L-glutamate: step 1/2. Its function is as follows. Catalyzes the transfer of a phosphate group to glutamate to form L-glutamate 5-phosphate. The polypeptide is Glutamate 5-kinase (Acinetobacter baumannii (strain AB307-0294)).